A 78-amino-acid chain; its full sequence is Protein EcdD (78 aa).

Functionally, involved in the non-oxidative decarboxylation and detoxification of phenolic derivatives under anaerobic conditions, however the precise biochemical function in metabolism of phenolic acid is unknown. The sequence is that of Protein EcdD from Escherichia coli O157:H7.